We begin with the raw amino-acid sequence, 73 residues long: MRKPKKKVCVFCKDKVEYIDFKDTSLLRKYISDRGKIRARRVSGNCSQHQRDVATAVKNSREMALLPYTASAR.

Belongs to the bacterial ribosomal protein bS18 family. As to quaternary structure, part of the 30S ribosomal subunit. Forms a tight heterodimer with protein bS6.

Binds as a heterodimer with protein bS6 to the central domain of the 16S rRNA, where it helps stabilize the platform of the 30S subunit. The protein is Small ribosomal subunit protein bS18B of Frankia alni (strain DSM 45986 / CECT 9034 / ACN14a).